The chain runs to 342 residues: Cilia- and flagella-associated protein 36 (342 aa).

2 positions are modified to phosphoserine: S85 and S147. Positions 150–187 (EHEEMKILREVLRKSKEEYDQEEERKRKKQLSEAKTEE) form a coiled coil. The disordered stretch occupies residues 166-194 (EEYDQEEERKRKKQLSEAKTEEPTVHSSE). Basic and acidic residues predominate over residues 179 to 189 (QLSEAKTEEPT). S201 carries the phosphoserine modification. 2 disordered regions span residues 229–250 (RKVE…PGLE) and 282–322 (KLMS…AEEK). 2 stretches are compositionally biased toward basic and acidic residues: residues 282 to 292 (KLMSMRKDMRT) and 300 to 322 (QKGK…AEEK).

It belongs to the CFAP36 family. In terms of assembly, interacts with ARL3. As to expression, expressed in several human tissues including brain, testis, heart, lung, pancreas and spleen (at protein level).

The protein localises to the nucleus. It localises to the cytoplasm. The protein resides in the cell projection. Its subcellular location is the cilium. It is found in the flagellum. May act as an effector for ARL3. The chain is Cilia- and flagella-associated protein 36 (CFAP36) from Homo sapiens (Human).